Consider the following 430-residue polypeptide: Tektin-2 (430 aa).

Coiled coils occupy residues 82–160 and 273–379; these read LTDL…QAFE and EKVY…DIAC.

It belongs to the tektin family. In terms of assembly, microtubule inner protein component of sperm flagellar doublet microtubules. May interact with CCDC172. Tyrosine phosphorylated. In terms of processing, ubiquitinated, leading to its degradation. Deubiquitinated by USP16, promoting its stability.

It localises to the cytoplasm. The protein localises to the cytoskeleton. It is found in the cilium axoneme. The protein resides in the flagellum axoneme. Its subcellular location is the microtubule organizing center. Its function is as follows. Microtubule inner protein (MIP) part of the dynein-decorated doublet microtubules (DMTs) in cilia and flagellar axoneme. Plays a key role in the assembly or attachment of the inner dynein arm to microtubules in sperm flagella and tracheal cilia. Forms filamentous polymers in the walls of ciliary and flagellar microtubules. In Macaca fascicularis (Crab-eating macaque), this protein is Tektin-2 (TEKT2).